A 115-amino-acid chain; its full sequence is UPF0738 protein SERP0585 (115 aa).

It belongs to the UPF0738 family.

This is UPF0738 protein SERP0585 from Staphylococcus epidermidis (strain ATCC 35984 / DSM 28319 / BCRC 17069 / CCUG 31568 / BM 3577 / RP62A).